We begin with the raw amino-acid sequence, 102 residues long: Small ribosomal subunit protein uS10 (102 aa).

Belongs to the universal ribosomal protein uS10 family. In terms of assembly, part of the 30S ribosomal subunit.

Its function is as follows. Involved in the binding of tRNA to the ribosomes. This Dehalococcoides mccartyi (strain ATCC BAA-2266 / KCTC 15142 / 195) (Dehalococcoides ethenogenes (strain 195)) protein is Small ribosomal subunit protein uS10.